A 389-amino-acid chain; its full sequence is Protein OSCP1 (389 aa).

As to expression, expressed predominantly in testis, also found in placenta and to a lesser extent in thymus and small intestine; abundantly expressed in tumor-derived cell lines. Ubiquitously expressed.

Its subcellular location is the basal cell membrane. In terms of biological role, may be involved in drug clearance in the placenta. The sequence is that of Protein OSCP1 (OSCP1) from Homo sapiens (Human).